Consider the following 428-residue polypeptide: UPF0761 membrane protein Ppha_1623 (428 aa).

The next 6 helical transmembrane spans lie at 52–72, 108–128, 148–168, 189–209, 216–233, and 252–272; these read LLSIVPILAVILSILNVFVVF, SVPILGGVFLFIIALFLISTV, FTLYWTVLTLGPVLIGSSLAA, LLSFFPFINSVAAFFLLYMLV, FVHAFSGALLAALLFELS, and GALSVIPMLFFWVYLGWIVVL.

It belongs to the UPF0761 family.

It is found in the cell inner membrane. The polypeptide is UPF0761 membrane protein Ppha_1623 (Pelodictyon phaeoclathratiforme (strain DSM 5477 / BU-1)).